The primary structure comprises 281 residues: Foldase protein PrsA (281 aa).

A signal peptide spans 1-18 (MKKWMMAAAVVSLMALSA). Cys19 carries N-palmitoyl cysteine lipidation. The S-diacylglycerol cysteine moiety is linked to residue Cys19. The PpiC domain occupies 133–223 (KPKIRASHIL…YGYHIIKVTD (91 aa)).

Belongs to the PrsA family.

The protein resides in the cell membrane. The enzyme catalyses [protein]-peptidylproline (omega=180) = [protein]-peptidylproline (omega=0). Its function is as follows. Plays a major role in protein secretion by helping the post-translocational extracellular folding of several secreted proteins. The polypeptide is Foldase protein PrsA (Geobacillus kaustophilus (strain HTA426)).